The primary structure comprises 202 residues: Recombination protein RecR (202 aa).

The C4-type zinc finger occupies 56–71 (CRVCGNLDSADPCSVC). One can recognise a Toprim domain in the interval 79 to 179 (GLICVVESVG…SVTRLAQGIP (101 aa)).

The protein belongs to the RecR family.

In terms of biological role, may play a role in DNA repair. It seems to be involved in an RecBC-independent recombinational process of DNA repair. It may act with RecF and RecO. This Granulibacter bethesdensis (strain ATCC BAA-1260 / CGDNIH1) protein is Recombination protein RecR.